A 214-amino-acid chain; its full sequence is 2-phospho-L-lactate guanylyltransferase (214 aa).

The protein belongs to the CofC family. As to quaternary structure, homodimer.

The catalysed reaction is (2S)-2-phospholactate + GTP + H(+) = (2S)-lactyl-2-diphospho-5'-guanosine + diphosphate. It participates in cofactor biosynthesis; coenzyme F420 biosynthesis. In terms of biological role, guanylyltransferase that catalyzes the activation of (2S)-2-phospholactate (2-PL) as (2S)-lactyl-2-diphospho-5'-guanosine, via the condensation of 2-PL with GTP. It is involved in the biosynthesis of coenzyme F420, a hydride carrier cofactor. This chain is 2-phospho-L-lactate guanylyltransferase, found in Methanoregula boonei (strain DSM 21154 / JCM 14090 / 6A8).